Here is a 616-residue protein sequence, read N- to C-terminus: Kelch-like protein 36 (616 aa).

Residues 46-113 (CDVVLVADEQ…LYGGELVLDG (68 aa)) form the BTB domain. The region spanning 148–250 (YLYLQELASI…PKNDLLHRVK (103 aa)) is the BACK domain. Kelch repeat units follow at residues 296–345 (CLLF…VLGG), 346–397 (FIFI…SIED), 398–444 (MLVA…IYKD), 446–493 (VYIS…SLGD), 494–546 (SIYS…VWEG), and 547–595 (RIYI…VCAL).

In terms of assembly, interacts with CUL3.

Its pathway is protein modification; protein ubiquitination. Functionally, probable substrate-specific adapter of an E3 ubiquitin-protein ligase complex which mediates the ubiquitination and subsequent proteasomal degradation of target proteins. This Bos taurus (Bovine) protein is Kelch-like protein 36 (KLHL36).